Here is a 232-residue protein sequence, read N- to C-terminus: 5'-methylthioadenosine/S-adenosylhomocysteine nucleosidase (232 aa).

E12 acts as the Proton acceptor in catalysis. Residues G78, I152, and 173–174 (ME) each bind substrate. The Proton donor role is filled by D197.

Belongs to the PNP/UDP phosphorylase family. MtnN subfamily. As to quaternary structure, homodimer.

The catalysed reaction is S-adenosyl-L-homocysteine + H2O = S-(5-deoxy-D-ribos-5-yl)-L-homocysteine + adenine. It catalyses the reaction S-methyl-5'-thioadenosine + H2O = 5-(methylsulfanyl)-D-ribose + adenine. The enzyme catalyses 5'-deoxyadenosine + H2O = 5-deoxy-D-ribose + adenine. It participates in amino-acid biosynthesis; L-methionine biosynthesis via salvage pathway; S-methyl-5-thio-alpha-D-ribose 1-phosphate from S-methyl-5'-thioadenosine (hydrolase route): step 1/2. Functionally, catalyzes the irreversible cleavage of the glycosidic bond in both 5'-methylthioadenosine (MTA) and S-adenosylhomocysteine (SAH/AdoHcy) to adenine and the corresponding thioribose, 5'-methylthioribose and S-ribosylhomocysteine, respectively. Also cleaves 5'-deoxyadenosine, a toxic by-product of radical S-adenosylmethionine (SAM) enzymes, into 5-deoxyribose and adenine. Thus, is required for in vivo function of the radical SAM enzymes biotin synthase and lipoic acid synthase, that are inhibited by 5'-deoxyadenosine accumulation. The sequence is that of 5'-methylthioadenosine/S-adenosylhomocysteine nucleosidase from Enterobacter sp. (strain 638).